The following is a 98-amino-acid chain: Integration host factor subunit alpha (98 aa).

The tract at residues 49 to 71 (FGNFDLRDKNQRPGRNPKTGEDI) is disordered.

This sequence belongs to the bacterial histone-like protein family. In terms of assembly, heterodimer of an alpha and a beta chain.

Its function is as follows. This protein is one of the two subunits of integration host factor, a specific DNA-binding protein that functions in genetic recombination as well as in transcriptional and translational control. In Shewanella amazonensis (strain ATCC BAA-1098 / SB2B), this protein is Integration host factor subunit alpha.